Reading from the N-terminus, the 204-residue chain is Elongation factor Ts (204 aa).

The interval 80-83 (TDFV) is involved in Mg(2+) ion dislocation from EF-Tu.

Belongs to the EF-Ts family.

It localises to the cytoplasm. Its function is as follows. Associates with the EF-Tu.GDP complex and induces the exchange of GDP to GTP. It remains bound to the aminoacyl-tRNA.EF-Tu.GTP complex up to the GTP hydrolysis stage on the ribosome. The polypeptide is Elongation factor Ts (Caldicellulosiruptor bescii (strain ATCC BAA-1888 / DSM 6725 / KCTC 15123 / Z-1320) (Anaerocellum thermophilum)).